The following is a 541-amino-acid chain: Membrane protein insertase YidC (541 aa).

The next 6 membrane-spanning stretches (helical) occupy residues Asn-6–Asp-26, Leu-325–Phe-345, Phe-349–Phe-369, Gly-420–Leu-440, Leu-457–Met-477, and Val-500–Gly-520.

This sequence belongs to the OXA1/ALB3/YidC family. Type 1 subfamily. In terms of assembly, interacts with the Sec translocase complex via SecD. Specifically interacts with transmembrane segments of nascent integral membrane proteins during membrane integration.

Its subcellular location is the cell inner membrane. Required for the insertion and/or proper folding and/or complex formation of integral membrane proteins into the membrane. Involved in integration of membrane proteins that insert both dependently and independently of the Sec translocase complex, as well as at least some lipoproteins. Aids folding of multispanning membrane proteins. This chain is Membrane protein insertase YidC, found in Shewanella baltica (strain OS223).